The chain runs to 220 residues: Adenylate kinase (220 aa).

12 to 17 (GAGKGT) provides a ligand contact to ATP. The segment at 32–62 (STGDIFRDIVKKENDELGKKIKEIMEKGELV) is NMP. AMP is bound by residues T33, R38, 60–62 (ELV), 88–91 (GYPR), and Q95. Residues 129-166 (SRRICPKCGRIYNMISLPPKEDELCDDCKVKLVQRDDD) are LID. R130 is a binding site for ATP. Zn(2+) contacts are provided by C133 and C136. 139 to 140 (IY) is a binding site for ATP. Positions 153 and 156 each coordinate Zn(2+). 2 residues coordinate AMP: R163 and R174. Residue I202 participates in ATP binding.

This sequence belongs to the adenylate kinase family. As to quaternary structure, monomer.

The protein resides in the cytoplasm. It catalyses the reaction AMP + ATP = 2 ADP. It participates in purine metabolism; AMP biosynthesis via salvage pathway; AMP from ADP: step 1/1. Catalyzes the reversible transfer of the terminal phosphate group between ATP and AMP. Plays an important role in cellular energy homeostasis and in adenine nucleotide metabolism. The polypeptide is Adenylate kinase (Thermotoga neapolitana).